A 96-amino-acid polypeptide reads, in one-letter code: MNYIVLAAIVFTIGAVGVLVRRNAIIVFMCVELMLNACNLAFVAFARMHGGIEGQVIAFFVMVVAAAEVVVGLAIIMQIFRTRRSASIDDANLLKN.

3 helical membrane passes run 1–21, 25–45, and 56–76; these read MNYI…VLVR, IIVF…FVAF, and VIAF…LAII.

Belongs to the complex I subunit 4L family. NDH-1 is composed of 14 different subunits. Subunits NuoA, H, J, K, L, M, N constitute the membrane sector of the complex.

It is found in the cell membrane. The enzyme catalyses a quinone + NADH + 5 H(+)(in) = a quinol + NAD(+) + 4 H(+)(out). Its function is as follows. NDH-1 shuttles electrons from NADH, via FMN and iron-sulfur (Fe-S) centers, to quinones in the respiratory chain. The immediate electron acceptor for the enzyme in this species is believed to be a menaquinone. Couples the redox reaction to proton translocation (for every two electrons transferred, four hydrogen ions are translocated across the cytoplasmic membrane), and thus conserves the redox energy in a proton gradient. This is NADH-quinone oxidoreductase subunit K from Thermobifida fusca (strain YX).